A 209-amino-acid chain; its full sequence is Large ribosomal subunit protein uL3 (209 aa).

This sequence belongs to the universal ribosomal protein uL3 family. As to quaternary structure, part of the 50S ribosomal subunit. Forms a cluster with proteins L14 and L19.

One of the primary rRNA binding proteins, it binds directly near the 3'-end of the 23S rRNA, where it nucleates assembly of the 50S subunit. In Pelobacter propionicus (strain DSM 2379 / NBRC 103807 / OttBd1), this protein is Large ribosomal subunit protein uL3.